The sequence spans 438 residues: Prenyltransferase malE (438 aa).

E92 contributes to the substrate binding site. Positions 106, 192, 194, 259, 261, 346, and 411 each coordinate dimethylallyl diphosphate.

The protein belongs to the tryptophan dimethylallyltransferase family.

It carries out the reaction (S)-3-(indol-3-ylmethyl)-6,7,8,8a-tetrahydropyrrolo[1,2-a]pyrazin-1-one + dimethylallyl diphosphate = (S)-3-{[2-(1,1-dimethylallyl)-indol-3-yl]methyl}-6,7,8,8a-tetrahydropyrrolo[1,2-a]pyrazin-1-one + diphosphate. The catalysed reaction is 1-hydroxy-3-(indol-3-ylmethyl)-6H,7H,8H-5lambda(5)-pyrrolo[1,2-a]pyrazine + dimethylallyl diphosphate = 1-hydroxy-3-{[2-(1,1-dimethylallyl)-indol-3-yl]methyl}-6H,7H,8H-5lambda(5)-pyrrolo[1,2-a]pyrazine + diphosphate. It participates in alkaloid biosynthesis. In terms of biological role, prenyltransferase; part of the gene cluster that mediates the biosynthesis of malbrancheamide, a dichlorinated fungal indole alkaloid that belongs to a family of natural products containing a characteristic bicyclo[2.2.2]diazaoctane core. The first step of malbrancheamide biosynthesis involves coupling of L-proline and L-tryptophan by malG, a bimodular NRPS, to produce L-Pro-L-Trp aldehyde through reductive offloading. This compound undergoes spontaneous cyclization and dehydration to give a dienamine which is reverse prenylated at C-2 by malE. The other prenyltransferase present in the cluster, malB, displays modest activity, suggesting that may be a redundant gene in the pathway. Subsequently, a [4+2] Diels-Alder cyclo-addition catalyzed by the bifunctional enzyme malC forms the characteristic bicyclo[2.2.2]diazaoctane ring of premalbrancheamid. Finally, the flavin-dependent halogenase malA catalyzes the iterative dichlorination of the indole ring of premalbrancheamide to yield C-9 monochlorinated malbrancheamide B, C-8 monochlorinated isomalbrancheamide B, and dichlorinated malbrancheamide. MalA is also able to brominate premalbrancheamide at C-9 to yield malbrancheamide C, and, to a lesser extend, at C-8 to yield isomalbrancheamide C. Finally, malA can brominate C-9 monochlorinated malbrancheamide B at C-8 to yield malbrancheamide D, or C-8 monochlorinated isomalbrancheamide B at C-9 to produce isomalbrancheamide D. The sequence is that of Prenyltransferase malE from Malbranchea aurantiaca.